Consider the following 109-residue polypeptide: MSDAGRKGFGEKASEALKPDSQKSYAEQGKEYITDKADKVAGKVQPEDNKGVFQGVHDSAEKGKDNAEGQGESLADQARDYMGAAKSKLNDAVEYVSGRVHGEEDPTKK.

Residues 1–21 (MSDAGRKGFGEKASEALKPDS) are compositionally biased toward basic and acidic residues. Positions 1-82 (MSDAGRKGFG…SLADQARDYM (82 aa)) are disordered. A Phosphoserine; by ATM or ATR modification is found at serine 21. Serine 24 is subject to Phosphoserine. Basic and acidic residues-rich tracts occupy residues 28-50 (QGKEYITDKADKVAGKVQPEDNK) and 58-67 (DSAEKGKDNA). A phosphoserine mark is found at serine 59, serine 73, and serine 97.

This sequence to S.pombe hsp9 and C.albicans WH11.

Its function is as follows. May play a role in a switch from carbohydrate utilizing metabolism to fatty acid utilizing metabolism. The protein is 12 kDa heat shock protein (HSP12) of Saccharomyces cerevisiae (strain ATCC 204508 / S288c) (Baker's yeast).